The following is a 495-amino-acid chain: Cytochrome P450 2E1 (495 aa).

298 to 303 contacts substrate; that stretch reads FAGTET. Heme is bound at residue Cys437.

It belongs to the cytochrome P450 family. In terms of assembly, interacts with chaperones HSP70 and HSP90; this interaction is required for initial targeting to mitochondria. Heme serves as cofactor.

The protein resides in the endoplasmic reticulum membrane. The protein localises to the microsome membrane. Its subcellular location is the mitochondrion inner membrane. It carries out the reaction an organic molecule + reduced [NADPH--hemoprotein reductase] + O2 = an alcohol + oxidized [NADPH--hemoprotein reductase] + H2O + H(+). It catalyses the reaction (5Z,8Z,11Z)-eicosatrienoate + reduced [NADPH--hemoprotein reductase] + O2 = 19-hydroxy-(5Z,8Z,11Z)-eicosatrienoate + oxidized [NADPH--hemoprotein reductase] + H2O + H(+). The catalysed reaction is (5Z,8Z,11Z,14Z,17Z)-eicosapentaenoate + reduced [NADPH--hemoprotein reductase] + O2 = 19-hydroxy-(5Z,8Z,11Z,14Z,17Z)-eicosapentaenoate + oxidized [NADPH--hemoprotein reductase] + H2O + H(+). The enzyme catalyses (4Z,7Z,10Z,13Z,16Z,19Z)-docosahexaenoate + reduced [NADPH--hemoprotein reductase] + O2 = 21-hydroxy-(4Z,7Z,10Z,13Z,16Z,19Z)-docosahexaenoate + oxidized [NADPH--hemoprotein reductase] + H2O + H(+). It carries out the reaction dodecanoate + reduced [NADPH--hemoprotein reductase] + O2 = 11-hydroxydodecanoate + oxidized [NADPH--hemoprotein reductase] + H2O + H(+). It catalyses the reaction tetradecanoate + reduced [NADPH--hemoprotein reductase] + O2 = 13-hydroxytetradecanoate + oxidized [NADPH--hemoprotein reductase] + H2O + H(+). The catalysed reaction is 4-nitrophenol + NADPH + O2 + H(+) = 4-nitrocatechol + NADP(+) + H2O. Its pathway is lipid metabolism; fatty acid metabolism. The omega-1 hydroxylase activity is stimulated by cytochrome b5. Functionally, a cytochrome P450 monooxygenase involved in the metabolism of fatty acids. Mechanistically, uses molecular oxygen inserting one oxygen atom into a substrate, and reducing the second into a water molecule, with two electrons provided by NADPH via cytochrome P450 reductase (NADPH--hemoprotein reductase). Catalyzes the hydroxylation of carbon-hydrogen bonds. Hydroxylates fatty acids specifically at the omega-1 position displaying the highest catalytic activity for saturated fatty acids. May be involved in the oxidative metabolism of xenobiotics. The polypeptide is Cytochrome P450 2E1 (CYP2E1) (Sus scrofa (Pig)).